Here is a 216-residue protein sequence, read N- to C-terminus: Probable GTP-binding protein EngB (216 aa).

Residues 26–210 (PMATIIFAGR…KNRIFEVIRE (185 aa)) form the EngB-type G domain. Residues 34 to 41 (GRSNVGKS), 59 to 63 (GVTRK), 76 to 79 (DMPG), 156 to 159 (NKLD), and 189 to 191 (ISA) contribute to the GTP site. Residues serine 41 and threonine 61 each contribute to the Mg(2+) site.

Belongs to the TRAFAC class TrmE-Era-EngA-EngB-Septin-like GTPase superfamily. EngB GTPase family. Mg(2+) is required as a cofactor.

Its function is as follows. Necessary for normal cell division and for the maintenance of normal septation. In Pyrococcus horikoshii (strain ATCC 700860 / DSM 12428 / JCM 9974 / NBRC 100139 / OT-3), this protein is Probable GTP-binding protein EngB.